A 141-amino-acid chain; its full sequence is uncharacterized protein (141 aa).

Positions 8 to 112 constitute a MaoC-like domain; that stretch reads IGQVFKTKSL…VLDKQPKRNE (105 aa).

This is an uncharacterized protein from Bacillus subtilis (strain 168).